The primary structure comprises 286 residues: MSEQVRHVLTLQCPEGIGIVHAVTGFLVRHQRTIVELKQYDDMSAGRLFLRVDFAGDSAPDLLDALRSEFSEVAAKFDMDWQLRERGQKTKVLIMVSKFEHCLQDLLFRMHSGDLPIEVVGVASNHPDHRSLVEWYGIGFHHIPISKDTKPRAEAALLELIDQTGAELVVLARYMQVLSDHLASELTGKTINIHHSFLPSFKGAKPYHQAWERGVKTVGATAHYVNSELDEGPIIAQQVVEVDHTYGPQDLVAAGRDSECKALSNAVRWHCEGRVFLYGNRTVVLR.

The ACT domain maps to 8–88; the sequence is VLTLQCPEGI…MDWQLRERGQ (81 aa). Asp230 is an active-site residue.

The protein belongs to the PurU family.

It carries out the reaction (6R)-10-formyltetrahydrofolate + H2O = (6S)-5,6,7,8-tetrahydrofolate + formate + H(+). It participates in purine metabolism; IMP biosynthesis via de novo pathway; formate from 10-formyl-5,6,7,8-tetrahydrofolate: step 1/1. Catalyzes the hydrolysis of 10-formyltetrahydrofolate (formyl-FH4) to formate and tetrahydrofolate (FH4). This chain is Formyltetrahydrofolate deformylase, found in Corynebacterium sp. (strain P-1).